A 176-amino-acid chain; its full sequence is ATP-dependent protease subunit HslV (176 aa).

Residue threonine 5 is part of the active site. Residues serine 161, cysteine 164, and threonine 167 each coordinate Na(+).

Belongs to the peptidase T1B family. HslV subfamily. In terms of assembly, a double ring-shaped homohexamer of HslV is capped on each side by a ring-shaped HslU homohexamer. The assembly of the HslU/HslV complex is dependent on binding of ATP.

Its subcellular location is the cytoplasm. The enzyme catalyses ATP-dependent cleavage of peptide bonds with broad specificity.. Allosterically activated by HslU binding. In terms of biological role, protease subunit of a proteasome-like degradation complex believed to be a general protein degrading machinery. The sequence is that of ATP-dependent protease subunit HslV from Desulfitobacterium hafniense (strain Y51).